Reading from the N-terminus, the 122-residue chain is MIQPQSYLTAADNSGARKLMCIRVLGGGNRRYARIGDVIVAVVKDGIPNIPIKKSDTVKAVIVRTRKELKRDNGMNICFDDNAAVIINADGNPRGTRVFGPVARELRDKNFTKIISLAPEVL.

Belongs to the universal ribosomal protein uL14 family. In terms of assembly, part of the 50S ribosomal subunit.

The protein resides in the plastid. Its subcellular location is the cyanelle. Its function is as follows. Binds to 23S rRNA. This Cyanophora paradoxa protein is Large ribosomal subunit protein uL14c.